The sequence spans 124 residues: Small ribosomal subunit protein uS12 (124 aa).

The tract at residues 1 to 32 (MPTIQQLVRKGRQDKVEKTKTPALKGSPQRRG) is disordered. Basic and acidic residues predominate over residues 11-20 (GRQDKVEKTK). D89 is modified (3-methylthioaspartic acid).

This sequence belongs to the universal ribosomal protein uS12 family. Part of the 30S ribosomal subunit. Contacts proteins S8 and S17. May interact with IF1 in the 30S initiation complex.

Functionally, with S4 and S5 plays an important role in translational accuracy. Its function is as follows. Interacts with and stabilizes bases of the 16S rRNA that are involved in tRNA selection in the A site and with the mRNA backbone. Located at the interface of the 30S and 50S subunits, it traverses the body of the 30S subunit contacting proteins on the other side and probably holding the rRNA structure together. The combined cluster of proteins S8, S12 and S17 appears to hold together the shoulder and platform of the 30S subunit. The polypeptide is Small ribosomal subunit protein uS12 (Frankia alni (strain DSM 45986 / CECT 9034 / ACN14a)).